Here is a 309-residue protein sequence, read N- to C-terminus: Voltage-dependent anion channel-forming protein mll4386 (309 aa).

Helical transmembrane passes span 32–52 (ILPQ…LARW), 58–78 (GVFN…YLSF), and 227–247 (IVCL…TPLF).

Belongs to the anion channel-forming bestrophin (TC 1.A.46) family.

The protein localises to the cell membrane. The sequence is that of Voltage-dependent anion channel-forming protein mll4386 from Mesorhizobium japonicum (strain LMG 29417 / CECT 9101 / MAFF 303099) (Mesorhizobium loti (strain MAFF 303099)).